The following is a 213-amino-acid chain: Golgi apparatus membrane protein TVP23 homolog A (213 aa).

4 consecutive transmembrane segments (helical) span residues 32–52 (PLAT…YVSC), 54–74 (WFSK…SLDF), 123–143 (IFWL…FSTL), and 150–170 (WLAL…GYIL).

This sequence belongs to the TVP23 family.

Its subcellular location is the membrane. The protein is Golgi apparatus membrane protein TVP23 homolog A (TVP23A) of Homo sapiens (Human).